We begin with the raw amino-acid sequence, 171 residues long: Photosystem I assembly protein Ycf3 (171 aa).

TPR repeat units follow at residues 35–68, 72–105, and 120–153; these read AFTY…EIDP, SYIL…NPSL, and GEQA…APSN.

It belongs to the Ycf3 family.

Its subcellular location is the plastid. The protein resides in the chloroplast thylakoid membrane. Functionally, essential for the assembly of the photosystem I (PSI) complex. May act as a chaperone-like factor to guide the assembly of the PSI subunits. This Angiopteris evecta (Mule's foot fern) protein is Photosystem I assembly protein Ycf3.